The following is a 252-amino-acid chain: 3-dehydroquinate dehydratase (252 aa).

3-dehydroquinate contacts are provided by residues Ser21, 46–48 (EWR), and Arg82. The active-site Proton donor/acceptor is the His143. Lys170 acts as the Schiff-base intermediate with substrate in catalysis. 3 residues coordinate 3-dehydroquinate: Arg213, Ser232, and Gln236.

The protein belongs to the type-I 3-dehydroquinase family. In terms of assembly, homodimer.

The catalysed reaction is 3-dehydroquinate = 3-dehydroshikimate + H2O. It functions in the pathway metabolic intermediate biosynthesis; chorismate biosynthesis; chorismate from D-erythrose 4-phosphate and phosphoenolpyruvate: step 3/7. Its function is as follows. Involved in the third step of the chorismate pathway, which leads to the biosynthesis of aromatic amino acids. Catalyzes the cis-dehydration of 3-dehydroquinate (DHQ) and introduces the first double bond of the aromatic ring to yield 3-dehydroshikimate. This is 3-dehydroquinate dehydratase from Shigella dysenteriae.